Here is a 138-residue protein sequence, read N- to C-terminus: UPF0355 protein SSP2326 (138 aa).

Residues 115–138 are disordered; sequence NVAFETNQTKSNSHYSEETNGPKS. Residues 118 to 138 are compositionally biased toward polar residues; it reads FETNQTKSNSHYSEETNGPKS.

Belongs to the UPF0355 family.

The polypeptide is UPF0355 protein SSP2326 (Staphylococcus saprophyticus subsp. saprophyticus (strain ATCC 15305 / DSM 20229 / NCIMB 8711 / NCTC 7292 / S-41)).